A 241-amino-acid polypeptide reads, in one-letter code: Phosphoglycolate phosphatase (241 aa).

Asp-8 acts as the Nucleophile in catalysis. Residues Asp-8, Asp-10, and Asp-174 each contribute to the Mg(2+) site.

Belongs to the HAD-like hydrolase superfamily. CbbY/CbbZ/Gph/YieH family. Mg(2+) is required as a cofactor.

The catalysed reaction is 2-phosphoglycolate + H2O = glycolate + phosphate. It participates in organic acid metabolism; glycolate biosynthesis; glycolate from 2-phosphoglycolate: step 1/1. Specifically catalyzes the dephosphorylation of 2-phosphoglycolate. Is involved in the dissimilation of the intracellular 2-phosphoglycolate formed during the DNA repair of 3'-phosphoglycolate ends, a major class of DNA lesions induced by oxidative stress. In Rhodospirillum rubrum (strain ATCC 11170 / ATH 1.1.1 / DSM 467 / LMG 4362 / NCIMB 8255 / S1), this protein is Phosphoglycolate phosphatase.